The chain runs to 1358 residues: DNA-directed RNA polymerase subunit beta (1358 aa).

This sequence belongs to the RNA polymerase beta chain family. The RNAP catalytic core consists of 2 alpha, 1 beta, 1 beta' and 1 omega subunit. When a sigma factor is associated with the core the holoenzyme is formed, which can initiate transcription.

It carries out the reaction RNA(n) + a ribonucleoside 5'-triphosphate = RNA(n+1) + diphosphate. In terms of biological role, DNA-dependent RNA polymerase catalyzes the transcription of DNA into RNA using the four ribonucleoside triphosphates as substrates. The polypeptide is DNA-directed RNA polymerase subunit beta (Thioalkalivibrio sulfidiphilus (strain HL-EbGR7)).